The following is a 470-amino-acid chain: Glutamate--tRNA ligase 1 (470 aa).

Positions 15–25 (PSPTGTMHIGT) match the 'HIGH' region motif. The 'KMSKS' region signature appears at 241–245 (KLSKR). Lys-244 is an ATP binding site.

The protein belongs to the class-I aminoacyl-tRNA synthetase family. Glutamate--tRNA ligase type 1 subfamily. Monomer.

It is found in the cytoplasm. The enzyme catalyses tRNA(Glu) + L-glutamate + ATP = L-glutamyl-tRNA(Glu) + AMP + diphosphate. Catalyzes the attachment of glutamate to tRNA(Glu) in a two-step reaction: glutamate is first activated by ATP to form Glu-AMP and then transferred to the acceptor end of tRNA(Glu). The sequence is that of Glutamate--tRNA ligase 1 from Jannaschia sp. (strain CCS1).